A 534-amino-acid chain; its full sequence is Cytochrome P450 monooxygenase vrtK (534 aa).

Position 448 (cysteine 448) interacts with heme.

This sequence belongs to the cytochrome P450 family. Requires heme as cofactor.

Its pathway is secondary metabolite biosynthesis; terpenoid biosynthesis. Its function is as follows. Cytochrome P450 monooxygenase; part of the gene cluster that mediates the biosynthesis of viridicatumtoxin, a tetracycline-like fungal meroterpenoid with a unique, fused spirobicyclic ring system. The first step of the pathway is the production of the malonamoyl-CoA starter unit for the polyketide synthase vrtA. The aldolase vrtJ may be involved in the synthesis of the malonamate substrate for malonamoyl-CoA synthetase vrtB. The polyketide synthase vrtA then may utilize the malonamoyl-CoA starter unit, followed by sequential condensation of eight malonyl-CoA units to form the polyketide backbone. The cyclization of the last ring could be mediated by the lactamase-like protein vrtG. The proposed post-PKS tailoring steps are a hydroxylation at C5 catalyzed the cytochrome P450 monooxygenase vrtE, a hydroxylation at C12a catalyzed by VrtH and/or VrtI, and an O-methylation by the O-methyltransferase vrtF. VrtC is then proposed to catalyze the transfer of a geranyl group synthesized by vrtD to the aromatic C ring of the tetracyclic polyketide intermediate of viridicatumtoxin to yield previridicatumtoxin. Finally, the cytochrome P450 monooxygenase vrtK catalyzes the spirocyclization of the geranyl moiety of previridicatumtoxin to afford viridicatumtoxin. In Penicillium aethiopicum, this protein is Cytochrome P450 monooxygenase vrtK.